Reading from the N-terminus, the 91-residue chain is Small ribosomal subunit protein bS16 (91 aa).

The protein belongs to the bacterial ribosomal protein bS16 family.

The polypeptide is Small ribosomal subunit protein bS16 (Lacticaseibacillus casei (strain BL23) (Lactobacillus casei)).